The chain runs to 364 residues: Protein-glutamate methylesterase/protein-glutamine glutaminase 1 (364 aa).

The region spanning 6–123 (KVLCVDDSAL…RDGMLDYSEK (118 aa)) is the Response regulatory domain. D57 carries the post-translational modification 4-aspartylphosphate. In terms of domain architecture, CheB-type methylesterase spans 165-357 (LVSTEKLIIV…RRIMARLASM (193 aa)). Active-site residues include S177, H203, and D299.

It belongs to the CheB family. In terms of processing, phosphorylated by CheA. Phosphorylation of the N-terminal regulatory domain activates the methylesterase activity.

Its subcellular location is the cytoplasm. The enzyme catalyses [protein]-L-glutamate 5-O-methyl ester + H2O = L-glutamyl-[protein] + methanol + H(+). It catalyses the reaction L-glutaminyl-[protein] + H2O = L-glutamyl-[protein] + NH4(+). Its function is as follows. Involved in chemotaxis. Part of a chemotaxis signal transduction system that modulates chemotaxis in response to various stimuli. Catalyzes the demethylation of specific methylglutamate residues introduced into the chemoreceptors (methyl-accepting chemotaxis proteins or MCP) by CheR. Also mediates the irreversible deamidation of specific glutamine residues to glutamic acid. The polypeptide is Protein-glutamate methylesterase/protein-glutamine glutaminase 1 (Burkholderia mallei (strain ATCC 23344)).